The following is a 510-amino-acid chain: Glycerol kinase (510 aa).

Threonine 12 lines the ADP pocket. Positions 12, 13, and 14 each coordinate ATP. Threonine 12 contacts sn-glycerol 3-phosphate. Arginine 16 contributes to the ADP binding site. Positions 82, 83, and 134 each coordinate sn-glycerol 3-phosphate. Arginine 82, glutamate 83, and tyrosine 134 together coordinate glycerol. Histidine 230 bears the Phosphohistidine; by HPr mark. Aspartate 244 is a binding site for sn-glycerol 3-phosphate. Residues aspartate 244 and glutamine 245 each coordinate glycerol. The ADP site is built by threonine 266 and glycine 309. The ATP site is built by threonine 266, glycine 309, glutamine 313, and glycine 410. ADP contacts are provided by glycine 410 and asparagine 414.

Belongs to the FGGY kinase family. As to quaternary structure, homotetramer and homodimer (in equilibrium). In terms of processing, the phosphoenolpyruvate-dependent sugar phosphotransferase system (PTS), including enzyme I, and histidine-containing protein (HPr) are required for the phosphorylation, which leads to the activation of the enzyme.

The enzyme catalyses glycerol + ATP = sn-glycerol 3-phosphate + ADP + H(+). It functions in the pathway polyol metabolism; glycerol degradation via glycerol kinase pathway; sn-glycerol 3-phosphate from glycerol: step 1/1. With respect to regulation, activated by phosphorylation and inhibited by fructose 1,6-bisphosphate (FBP). Functionally, key enzyme in the regulation of glycerol uptake and metabolism. Catalyzes the phosphorylation of glycerol to yield sn-glycerol 3-phosphate. The sequence is that of Glycerol kinase from Bacillus cereus (strain ATCC 10987 / NRS 248).